A 435-amino-acid chain; its full sequence is Homoserine dehydrogenase (435 aa).

Positions 13, 14, and 104 each coordinate NADPH. Residue V14 coordinates NAD(+). NADP(+) contacts are provided by V14 and K104. Na(+) contacts are provided by E128, V131, G133, and I135. NADP(+) is bound by residues G186 and E189. E189 and D200 together coordinate L-homoserine. The active-site Proton donor is K204. G301 lines the NADPH pocket. G301 is a binding site for NAD(+). G301 serves as a coordination point for NADP(+). Residues 354 to 429 (YLRVQAKDEP…CVEKPITMIR (76 aa)) enclose the ACT domain.

It belongs to the homoserine dehydrogenase family. In terms of assembly, homotetramer. A metal cation serves as cofactor.

The catalysed reaction is L-homoserine + NAD(+) = L-aspartate 4-semialdehyde + NADH + H(+). The protein operates within amino-acid biosynthesis; L-methionine biosynthesis via de novo pathway; L-homoserine from L-aspartate: step 3/3. It participates in amino-acid biosynthesis; L-threonine biosynthesis; L-threonine from L-aspartate: step 3/5. Its activity is regulated as follows. Neither NaCl nor KCl increase the activity. L-threonine and L-serine do not markedly inhibit the oxidation activity. Catalyzes the conversion of L-aspartate-beta-semialdehyde (L-Asa) to L-homoserine (L-Hse), the third step in the biosynthesis of threonine and methionine from aspartate. Is highly specific for NAD(+), and displays an approximate 479-fold (kcat/Km) preference for NAD(+) over NADP(+). The sequence is that of Homoserine dehydrogenase from Neisseria gonorrhoeae (strain ATCC 700825 / FA 1090).